Consider the following 777-residue polypeptide: Glucocorticoid receptor (777 aa).

Basic and acidic residues predominate over residues 1–14 (MDSKESLTPGKEEN). Residues 1 to 23 (MDSKESLTPGKEENPSSVLTQER) are disordered. The interval 1-420 (MDSKESLTPG…TATTGPPPKL (420 aa)) is modulating. T8 bears the Phosphothreonine mark. R23 carries the post-translational modification Omega-N-methylarginine. Residues S45, S113, S134, and S141 each carry the phosphoserine modification. The tract at residues 130–182 (NRSTSVPENPKSSASSSVSAAPKEKEFPKTHSDVSSEQQNLKGQTGTNGGNVK) is disordered. A compositionally biased stretch (low complexity) spans 134–150 (SVPENPKSSASSSVSAA). Residues 151–163 (PKEKEFPKTHSDV) are compositionally biased toward basic and acidic residues. Residues 164–174 (SSEQQNLKGQT) show a composition bias toward polar residues. Residues S203, S211, and S226 each carry the phosphoserine modification. Residue K258 forms a Glycyl lysine isopeptide (Lys-Gly) (interchain with G-Cter in SUMO2) linkage. S267 is subject to Phosphoserine. Glycyl lysine isopeptide (Lys-Gly) (interchain with G-Cter in SUMO); alternate cross-links involve residues K277 and K293. Residues K277 and K293 each participate in a glycyl lysine isopeptide (Lys-Gly) (interchain with G-Cter in SUMO2); alternate cross-link. Positions 394-414 (SSPSMRPDVSSPPSSSSTATT) are enriched in low complexity. Positions 394 to 415 (SSPSMRPDVSSPPSSSSTATTG) are disordered. A Phosphoserine modification is found at S404. K419 is covalently cross-linked (Glycyl lysine isopeptide (Lys-Gly) (interchain with G-Cter in ubiquitin)). NR C4-type zinc fingers lie at residues 421–441 (CLVCSDEASGCHYGVLTCGSC) and 457–481 (CAGRNDCIIDKIRRKNCPACRYRKC). The nuclear receptor DNA-binding region spans 421-486 (CLVCSDEASG…RYRKCLQAGM (66 aa)). An N6-acetyllysine mark is found at K480, K492, K494, and K495. Residues 485 to 777 (GMNLEARKTK…NIKKLLFHQK (293 aa)) form an interaction with CLOCK region. The hinge stretch occupies residues 487–523 (NLEARKTKKKIKGIQQATTGVSQETSENPANKTIVPA). The NR LBD domain occupies 524 to 758 (TLPQLTPTLV…FPEMLAEIIT (235 aa)). The interaction with CRY1 stretch occupies residues 532-697 (LVSLLEVIEP…EIRMTYIKEL (166 aa)). K703 is covalently cross-linked (Glycyl lysine isopeptide (Lys-Gly) (interchain with G-Cter in SUMO)).

It belongs to the nuclear hormone receptor family. NR3 subfamily. In terms of assembly, heteromultimeric cytoplasmic complex with HSP90AA1, HSPA1A/HSPA1B, and FKBP5 or another immunophilin such as PPID, STIP1, or the immunophilin homolog PPP5C. Upon ligand binding FKBP5 dissociates from the complex and FKBP4 takes its place, thereby linking the complex to dynein and mediating transport to the nucleus, where the complex dissociates. Probably forms a complex composed of chaperones HSP90 and HSP70, co-chaperones CDC37, PPP5C, TSC1 and client protein TSC2, CDK4, AKT, RAF1 and NR3C1; this complex does not contain co-chaperones STIP1/HOP and PTGES3/p23. Directly interacts with UNC45A. Binds to DNA as a homodimer, and as heterodimer with NR3C2 or the retinoid X receptor. Binds STAT5A and STAT5B homodimers and heterodimers. Interacts with NRIP1, POU2F1, POU2F2 and TRIM28. Interacts with several coactivator complexes, including the SMARCA4 complex, CREBBP/EP300, TADA2L (Ada complex) and p160 coactivators such as NCOA2 and NCOA6. Interaction with BAG1 inhibits transactivation. Interacts with HEXIM1 and TGFB1I1. Interacts with NCOA1. Interacts with NCOA3, SMARCA4, SMARCC1, SMARCD1, and SMARCE1. Interacts with CLOCK, CRY1 and CRY2 in a ligand-dependent fashion. Interacts with CIART. Interacts with RWDD3. Interacts with UBE2I/UBC9 and this interaction is enhanced in the presence of RWDD3. Interacts with GRIP1. Interacts with NR4A3 (via nuclear receptor DNA-binding domain), represses transcription activity of NR4A3 on the POMC promoter Nur response element (NurRE). Directly interacts with PNRC2 to attract and form a complex with UPF1 and DCP1A; the interaction leads to rapid mRNA degradation. Interacts with GSK3B. Interacts with FNIP1 and FNIP2. Interacts (via C-terminus) with HNRNPU (via C-terminus). Interacts with MCM3AP. Interacts (via domain NR LBD) with HSP90AA1 and HSP90AB1. In the absence of hormonal ligand, interacts with TACC1. Interacts (via NR LBD domain) with ZNF764 (via KRAB domain); the interaction regulates transcription factor activity of NR3C1 by directing its actions toward certain biologic pathways. Post-translationally, acetylation by CLOCK reduces its binding to glucocorticoid response elements and its transcriptional activity. In terms of processing, increased proteasome-mediated degradation in response to glucocorticoids. Phosphorylated in the absence of hormone; becomes hyperphosphorylated in the presence of glucocorticoid. The Ser-203, Ser-226 and Ser-404-phosphorylated forms are mainly cytoplasmic, and the Ser-211-phosphorylated form is nuclear. Phosphorylation at Ser-211 increases transcriptional activity. Phosphorylation at Ser-203, Ser-226 and Ser-404 decreases signaling capacity. Phosphorylation at Ser-404 may protect from glucocorticoid-induced apoptosis. Phosphorylation at Ser-203 and Ser-211 is not required in regulation of chromosome segregation. May be dephosphorylated by PPP5C, attenuates NR3C1 action. Post-translationally, ubiquitinated by UBR5, leading to its degradation: UBR5 specifically recognizes and binds ligand-bound NR3C1 when it is not associated with coactivators (NCOAs). In presence of NCOAs, the UBR5-degron is not accessible, preventing its ubiquitination and degradation. In terms of processing, sumoylation at Lys-277 and Lys-293 negatively regulates its transcriptional activity. Sumoylation at Lys-703 positively regulates its transcriptional activity in the presence of RWDD3. Sumoylation at Lys-277 and Lys-293 is dispensable whereas sumoylation at Lys-703 is critical for the stimulatory effect of RWDD3 on its transcriptional activity. Heat shock increases sumoylation in a RWWD3-dependent manner.

Its subcellular location is the cytoplasm. The protein resides in the nucleus. It localises to the mitochondrion. The protein localises to the cytoskeleton. It is found in the spindle. Its subcellular location is the microtubule organizing center. The protein resides in the centrosome. It localises to the chromosome. The protein localises to the nucleoplasm. In terms of biological role, receptor for glucocorticoids (GC). Has a dual mode of action: as a transcription factor that binds to glucocorticoid response elements (GRE), both for nuclear and mitochondrial DNA, and as a modulator of other transcription factors. Affects inflammatory responses, cellular proliferation and differentiation in target tissues. Involved in chromatin remodeling. Plays a role in rapid mRNA degradation by binding to the 5' UTR of target mRNAs and interacting with PNRC2 in a ligand-dependent manner which recruits the RNA helicase UPF1 and the mRNA-decapping enzyme DCP1A, leading to RNA decay. Could act as a coactivator for STAT5-dependent transcription upon growth hormone (GH) stimulation and could reveal an essential role of hepatic GR in the control of body growth. Mediates glucocorticoid-induced apoptosis. Promotes accurate chromosome segregation during mitosis. May act as a tumor suppressor. May play a negative role in adipogenesis through the regulation of lipolytic and antilipogenic gene expression. This chain is Glucocorticoid receptor (NR3C1), found in Aotus nancymaae (Ma's night monkey).